Consider the following 67-residue polypeptide: Large ribosomal subunit protein uL30 (67 aa).

The protein belongs to the universal ribosomal protein uL30 family. As to quaternary structure, part of the 50S ribosomal subunit.

This Thermotoga neapolitana (strain ATCC 49049 / DSM 4359 / NBRC 107923 / NS-E) protein is Large ribosomal subunit protein uL30.